A 935-amino-acid polypeptide reads, in one-letter code: Potassium channel AKT1 (935 aa).

At 1-106 (MARWGAARMA…YDRRYRIWET (106 aa)) the chain is on the cytoplasmic side. Residues 107 to 127 (FLIVLVVYSAWVSPFEFGFIP) traverse the membrane as a helical segment. Topologically, residues 128-136 (KPTGALATA) are extracellular. A helical membrane pass occupies residues 137 to 157 (DNVVNAFFAVDIILTFFVAYL). Over 158-178 (DKMSYMLEDDPKKIAWRYSTT) the chain is Cytoplasmic. A helical transmembrane segment spans residues 179 to 199 (WLVLDVASTIPSEFARRILPS). Over 200–205 (KLRSYG) the chain is Extracellular. The chain crosses the membrane as a helical; Voltage-sensor span at residues 206-226 (FFNMLRLWRLRRVSSLFSRLE). Residues 227 to 240 (KDRHFNYFWVRCAK) are Cytoplasmic-facing. A helical membrane pass occupies residues 241–261 (LICVTLFAVHCAACFYYLLAD). Residues 262-288 (RYPVPTSTWIGNYMADFHERSLWIRYV) lie on the Extracellular side of the membrane. The segment at residues 289-308 (TSVYWSITTLTTVGYGDLHA) is an intramembrane region (pore-forming). Topologically, residues 309–312 (ENTR) are extracellular. Residues 313 to 333 (EMIFNIFYMLFNLGLTAYLIG) form a helical membrane-spanning segment. Residues 334–935 (NMTNLVVHGT…WDAEKMKGKS (602 aa)) lie on the Cytoplasmic side of the membrane. 419-538 (LFQGVSNDLI…TIIMNNLIQF (120 aa)) contacts a nucleoside 3',5'-cyclic phosphate. ANK repeat units lie at residues 565–594 (DLPI…DPNE), 598–627 (DGHT…DPNA), 631–660 (EGKV…DLSS), 662–691 (DTGL…DVNR), 695–724 (DGTT…DIDK), and 728–757 (NGWT…ATAS). A disordered region spans residues 826-854 (SQAQRETDHPLSRGGLAATGSPNPSSGSR). Residues 845–854 (GSPNPSSGSR) show a composition bias toward polar residues. A KHA domain is found at 859–935 (RVTISCPEKG…WDAEKMKGKS (77 aa)).

This sequence belongs to the potassium channel family. Plant (TC 1.A.1.4) subfamily. The potassium channel is probably a homo- or heterotetrameric complex of pore-forming subunits. In terms of tissue distribution, expressed in roots and coleoptile of young seedlings.

Its subcellular location is the membrane. In terms of biological role, highly selective inward-rectifying potassium channel that mediates potassium uptake by plant roots. Assuming opened or closed conformations in response to the voltage difference across the membrane, the channel is activated by hyperpolarization. May be a major salt-sensitive potassium channel in roots. The chain is Potassium channel AKT1 (AKT1) from Oryza sativa subsp. japonica (Rice).